The sequence spans 352 residues: MTIELSDRQKQILGATINHYIATAEPVASKAIATEYNLNVSPATVRNTMLLLEKSGLLYQPHTSAGRVPSDSGYRVYVDELIQPIPDIARKAESLLSERFIWRQQRLEVILRQAAQLLSDLSGYITLITLPNALERQIRVIQLVALDSQQVMVILVLDTYETQSALIQLEQGEEDPELRERTLQVLTNFLNHQLQGRSLVELSAIDWQKLDLEFQTYSQQLQALLRQLRDRYSHQGTAFVISGLADLLQQPEFSQVEQVQMLLHLLEDQQDQLAPLITTDSQAPSQVQIRIGSENTLAPMQCCTLVYSCYCYGDSPVGSIGILGPTRMPYARIIPLVATAADYLTEQVSCRR.

The protein belongs to the HrcA family.

Functionally, negative regulator of class I heat shock genes (grpE-dnaK-dnaJ and groELS operons). Prevents heat-shock induction of these operons. The protein is Heat-inducible transcription repressor HrcA of Thermosynechococcus vestitus (strain NIES-2133 / IAM M-273 / BP-1).